The following is a 323-amino-acid chain: UDP-N-acetylenolpyruvoylglucosamine reductase (323 aa).

An FAD-binding PCMH-type domain is found at 33-214 (IGGPAEALFC…LSAVFTLTHG (182 aa)). Ser-243 serves as the catalytic Proton donor. Residue Glu-315 is part of the active site.

It belongs to the MurB family. FAD serves as cofactor.

The protein resides in the cytoplasm. It catalyses the reaction UDP-N-acetyl-alpha-D-muramate + NADP(+) = UDP-N-acetyl-3-O-(1-carboxyvinyl)-alpha-D-glucosamine + NADPH + H(+). It functions in the pathway cell wall biogenesis; peptidoglycan biosynthesis. Cell wall formation. The polypeptide is UDP-N-acetylenolpyruvoylglucosamine reductase (Treponema denticola (strain ATCC 35405 / DSM 14222 / CIP 103919 / JCM 8153 / KCTC 15104)).